A 183-amino-acid chain; its full sequence is Probable cobalt-precorrin-6B C(15)-methyltransferase (decarboxylating) (183 aa).

Residues threonine 19, 43–47 (GCGSG), aspartate 64, and alanine 92 contribute to the S-adenosyl-L-methionine site.

Belongs to the methyltransferase superfamily. Archaeal-type CbiT family.

It catalyses the reaction Co-precorrin-6B + S-adenosyl-L-methionine = Co-precorrin-7 + S-adenosyl-L-homocysteine + CO2. It functions in the pathway cofactor biosynthesis; adenosylcobalamin biosynthesis; cob(II)yrinate a,c-diamide from sirohydrochlorin (anaerobic route): step 8/10. Its function is as follows. Catalyzes the methylation of C-15 in cobalt-precorrin-6B followed by the decarboxylation of C-12 to form cobalt-precorrin-7. This chain is Probable cobalt-precorrin-6B C(15)-methyltransferase (decarboxylating), found in Methanocaldococcus jannaschii (strain ATCC 43067 / DSM 2661 / JAL-1 / JCM 10045 / NBRC 100440) (Methanococcus jannaschii).